We begin with the raw amino-acid sequence, 309 residues long: Dihydroorotate dehydrogenase B (NAD(+)), catalytic subunit (309 aa).

FMN is bound by residues Ser-21 and 45–46 (KA). Residues Lys-45 and 69 to 73 (NAIGL) each bind substrate. Positions 99 and 127 each coordinate FMN. Position 127 (Asn-127) interacts with substrate. Catalysis depends on Cys-130, which acts as the Nucleophile. Residues Lys-165 and Ile-191 each coordinate FMN. 192–193 (NT) serves as a coordination point for substrate. FMN-binding positions include Gly-217, 243–244 (GG), and 265–266 (GT).

It belongs to the dihydroorotate dehydrogenase family. Type 1 subfamily. Heterotetramer of 2 PyrK and 2 PyrD type B subunits. The cofactor is FMN.

The protein localises to the cytoplasm. It carries out the reaction (S)-dihydroorotate + NAD(+) = orotate + NADH + H(+). It participates in pyrimidine metabolism; UMP biosynthesis via de novo pathway; orotate from (S)-dihydroorotate (NAD(+) route): step 1/1. In terms of biological role, catalyzes the conversion of dihydroorotate to orotate with NAD(+) as electron acceptor. In Bacillus cereus (strain ATCC 14579 / DSM 31 / CCUG 7414 / JCM 2152 / NBRC 15305 / NCIMB 9373 / NCTC 2599 / NRRL B-3711), this protein is Dihydroorotate dehydrogenase B (NAD(+)), catalytic subunit (pyrD).